A 339-amino-acid chain; its full sequence is Protein FAM76B (339 aa).

At alanine 2 the chain carries N-acetylalanine. A phosphoserine mark is found at serine 22 and serine 148. Residues 144 to 243 are disordered; the sequence is EQRKSLGSSH…INQSADSGGT (100 aa). The span at 148 to 160 shows a compositional bias: low complexity; it reads SLGSSHSNSSSSS. A compositionally biased stretch (basic residues) spans 167 to 189; sequence HHPKHHHHHHHHHHRHSSSHHKI. Serine 193 is subject to Phosphoserine. Threonine 215 is modified (phosphothreonine). The segment covering 215-224 has biased composition (basic and acidic residues); that stretch reads TPKKKPKLES. Polar residues predominate over residues 228–243; sequence NGDSSSINQSADSGGT. The stretch at 248-328 forms a coiled coil; it reads LISQLKEEVM…QVAALSKGKK (81 aa).

The protein belongs to the FAM76 family. Interacts with HNRNPA2B1 (via C-terminus); the interaction results in retention of HNRNPA2B1 in the nucleus and inhibition of the NF-kappa-B-mediated inflammatory pathway.

It is found in the nucleus speckle. Functionally, negatively regulates the NF-kappa-B-mediated inflammatory pathway by preventing the translocation of HNRNPA2B1 from the nucleus to the cytoplasm. Inhibits the PI3K/Akt/NF-kappa-B pathway-mediated polarization of M1 macrophages by binding to and stabilizing PIK3CD mRNA, resulting in increased levels of PIK3CD protein and increased levels of phosphorylated downstream target AKT which leads to decreased NF-kappa-B signaling. The sequence is that of Protein FAM76B (FAM76B) from Homo sapiens (Human).